The primary structure comprises 1045 residues: Putative sodium-coupled neutral amino acid transporter 10 (1045 aa).

A run of 10 helical transmembrane segments spans residues 8–28 (LIMN…PFCF), 33–53 (ILLG…SCMF), 85–105 (SMIG…GDLG), 117–137 (VSEG…VLPL), 150–170 (FSAM…LSSF), 226–246 (IFAL…FFGY), 269–289 (MIRV…ILPC), 320–340 (ILTL…PNVE), 342–362 (ILGL…PALI), and 375–395 (FILG…LTVT). 3 stretches are compositionally biased toward basic and acidic residues: residues 412-453 (KEEK…EEQI), 460-479 (PQKE…RPDQ), and 503-546 (VDEK…DQAE). 2 disordered regions span residues 412 to 584 (KEEK…EQPP) and 606 to 658 (EIAE…AEAG). The segment covering 564-573 (NDPNKQQLVN) has biased composition (polar residues). Basic and acidic residues predominate over residues 627–658 (PIKDEKNEQIPGDPGKESHVEPKAEDNQAEAG).

Belongs to the amino acid/polyamine transporter 2 family.

The protein resides in the membrane. Functionally, putative sodium-dependent amino acid/proton antiporter. This is Putative sodium-coupled neutral amino acid transporter 10 (slc38a10) from Xenopus laevis (African clawed frog).